Consider the following 300-residue polypeptide: Probable alpha-L-glutamate ligase (300 aa).

The ATP-grasp domain occupies 104–287 (LQLLARQGID…IAGKMISWIE (184 aa)). Residues lysine 141, 178–179 (EY), aspartate 187, and 211–213 (RSN) each bind ATP. Positions 248, 260, and 262 each coordinate Mg(2+). 3 residues coordinate Mn(2+): aspartate 248, glutamate 260, and asparagine 262.

Belongs to the RimK family. The cofactor is Mg(2+). Requires Mn(2+) as cofactor.

In Enterobacter sp. (strain 638), this protein is Probable alpha-L-glutamate ligase.